Reading from the N-terminus, the 476-residue chain is 3-isopropylmalate dehydratase large subunit (476 aa).

Residues C353, C413, and C416 each coordinate [4Fe-4S] cluster.

This sequence belongs to the aconitase/IPM isomerase family. LeuC type 1 subfamily. As to quaternary structure, heterodimer of LeuC and LeuD. [4Fe-4S] cluster is required as a cofactor.

It carries out the reaction (2R,3S)-3-isopropylmalate = (2S)-2-isopropylmalate. The protein operates within amino-acid biosynthesis; L-leucine biosynthesis; L-leucine from 3-methyl-2-oxobutanoate: step 2/4. Its function is as follows. Catalyzes the isomerization between 2-isopropylmalate and 3-isopropylmalate, via the formation of 2-isopropylmaleate. This is 3-isopropylmalate dehydratase large subunit from Yersinia pseudotuberculosis serotype O:1b (strain IP 31758).